The chain runs to 165 residues: Endoribonuclease YbeY (165 aa).

Residues His-131, His-135, and His-141 each contribute to the Zn(2+) site.

Belongs to the endoribonuclease YbeY family. The cofactor is Zn(2+).

The protein localises to the cytoplasm. Functionally, single strand-specific metallo-endoribonuclease involved in late-stage 70S ribosome quality control and in maturation of the 3' terminus of the 16S rRNA. The chain is Endoribonuclease YbeY from Lachnoclostridium phytofermentans (strain ATCC 700394 / DSM 18823 / ISDg) (Clostridium phytofermentans).